Consider the following 243-residue polypeptide: Ubiquinone biosynthesis O-methyltransferase (243 aa).

4 residues coordinate S-adenosyl-L-methionine: arginine 45, glycine 65, aspartate 86, and leucine 130.

It belongs to the methyltransferase superfamily. UbiG/COQ3 family.

It carries out the reaction a 3-demethylubiquinol + S-adenosyl-L-methionine = a ubiquinol + S-adenosyl-L-homocysteine + H(+). The catalysed reaction is a 3-(all-trans-polyprenyl)benzene-1,2-diol + S-adenosyl-L-methionine = a 2-methoxy-6-(all-trans-polyprenyl)phenol + S-adenosyl-L-homocysteine + H(+). It functions in the pathway cofactor biosynthesis; ubiquinone biosynthesis. Functionally, O-methyltransferase that catalyzes the 2 O-methylation steps in the ubiquinone biosynthetic pathway. The protein is Ubiquinone biosynthesis O-methyltransferase of Idiomarina loihiensis (strain ATCC BAA-735 / DSM 15497 / L2-TR).